A 213-amino-acid polypeptide reads, in one-letter code: Redox-sensing transcriptional repressor Rex (213 aa).

A DNA-binding region (H-T-H motif) is located at residues 18-57 (LYYRFLKNLHASGKQRVSSAELSEAVKVDPATIRRDFSYF). Residue 92–97 (GVGNLG) participates in NAD(+) binding.

It belongs to the transcriptional regulatory Rex family. Homodimer.

It localises to the cytoplasm. Its function is as follows. Modulates transcription in response to changes in cellular NADH/NAD(+) redox state. In Geobacillus kaustophilus (strain HTA426), this protein is Redox-sensing transcriptional repressor Rex.